Reading from the N-terminus, the 407-residue chain is Imidazolonepropionase (407 aa).

Fe(3+) contacts are provided by His68 and His70. Residues His68 and His70 each coordinate Zn(2+). Arg77, Tyr140, and His173 together coordinate 4-imidazolone-5-propanoate. N-formimidoyl-L-glutamate is bound at residue Tyr140. Residue His238 participates in Fe(3+) binding. His238 provides a ligand contact to Zn(2+). Gln241 is a binding site for 4-imidazolone-5-propanoate. Asp313 serves as a coordination point for Fe(3+). A Zn(2+)-binding site is contributed by Asp313. Residues Asn315 and Gly317 each coordinate N-formimidoyl-L-glutamate. Thr318 provides a ligand contact to 4-imidazolone-5-propanoate.

The protein belongs to the metallo-dependent hydrolases superfamily. HutI family. It depends on Zn(2+) as a cofactor. Fe(3+) serves as cofactor.

It localises to the cytoplasm. The enzyme catalyses 4-imidazolone-5-propanoate + H2O = N-formimidoyl-L-glutamate. It functions in the pathway amino-acid degradation; L-histidine degradation into L-glutamate; N-formimidoyl-L-glutamate from L-histidine: step 3/3. In terms of biological role, catalyzes the hydrolytic cleavage of the carbon-nitrogen bond in imidazolone-5-propanoate to yield N-formimidoyl-L-glutamate. It is the third step in the universal histidine degradation pathway. This is Imidazolonepropionase from Burkholderia pseudomallei (strain 668).